The sequence spans 62 residues: Bowman-Birk type proteinase inhibitor B7 (62 aa).

Intrachain disulfides connect C5–C59, C6–C23, C13–C21, C30–C37, and C34–C51.

It belongs to the Bowman-Birk serine protease inhibitor family. Expressed in bulb (at protein level).

Serine protease inhibitor. Inhibits trypsin (Ki = 65 nM) and weakly inhibits chymotrypsin (Ki = 295 nM). Does not inhibit bacterial subtilisin. The chain is Bowman-Birk type proteinase inhibitor B7 from Hyacinthus orientalis (Common hyacinth).